Here is a 323-residue protein sequence, read N- to C-terminus: tRNA U34 carboxymethyltransferase (323 aa).

Carboxy-S-adenosyl-L-methionine-binding positions include K91, W105, K110, G130, 152-154, 181-182, M196, Y200, and R315; these read DPS and IE.

It belongs to the class I-like SAM-binding methyltransferase superfamily. CmoB family. Homotetramer.

It catalyses the reaction carboxy-S-adenosyl-L-methionine + 5-hydroxyuridine(34) in tRNA = 5-carboxymethoxyuridine(34) in tRNA + S-adenosyl-L-homocysteine + H(+). Its function is as follows. Catalyzes carboxymethyl transfer from carboxy-S-adenosyl-L-methionine (Cx-SAM) to 5-hydroxyuridine (ho5U) to form 5-carboxymethoxyuridine (cmo5U) at position 34 in tRNAs. This Vibrio cholerae serotype O1 (strain ATCC 39541 / Classical Ogawa 395 / O395) protein is tRNA U34 carboxymethyltransferase.